The sequence spans 313 residues: MATQQPCRPKSKPPACHVRLPPEPPLKLKVVGLFKSSSFQVSKTIAETLKTSYPYRFEDPVIVPLQEFAWDQFLEEKKRELKGETWVYSSYVMCFVNDQLLGNAFDLKKWAQKVWDVIDVRPSALYEALTLDYATKFLKDTKHDFVYLDICIDLSPIGRLIFELYCDACPRTCTNFQVLCTGTSGFSERGTKLHYKDSIFHRVVQNGWIQGGDIVQGRGDDGESIYGPTFEDENFSIPHNKRGVLGMVNKGHHTNGSQFYITLQAAPYLDKKYVAFGQLIEGTHVLKQLELVPTENERPLLLCSIADSGVLYT.

The PPIase cyclophilin-type domain maps to 147 to 310; the sequence is YLDICIDLSP…LLCSIADSGV (164 aa).

The protein belongs to the cyclophilin-type PPIase family.

Probable inactive PPIase with no peptidyl-prolyl cis-trans isomerase activity. In Mus musculus (Mouse), this protein is Probable inactive peptidyl-prolyl cis-trans isomerase-like 6.